The sequence spans 82 residues: Turripeptide IX-04 (82 aa).

Residues 1-21 (MGFYMLLTVALLLTSLMNVEA) form the signal peptide. A propeptide spanning residues 22–39 (TPVDQAERSALEKSGLGN) is cleaved from the precursor. 3 cysteine pairs are disulfide-bonded: cysteine 48–cysteine 70, cysteine 55–cysteine 74, and cysteine 60–cysteine 81.

In terms of tissue distribution, expressed by the venom duct.

It localises to the secreted. The sequence is that of Turripeptide IX-04 from Gemmula speciosa (Splendid gem-turris).